The primary structure comprises 145 residues: Ribonuclease P protein component (145 aa).

A disordered region spans residues 119 to 145 (PLPAAPGTMPPARTVRPSSPSPTEPEL).

It belongs to the RnpA family. In terms of assembly, consists of a catalytic RNA component (M1 or rnpB) and a protein subunit.

It carries out the reaction Endonucleolytic cleavage of RNA, removing 5'-extranucleotides from tRNA precursor.. Functionally, RNaseP catalyzes the removal of the 5'-leader sequence from pre-tRNA to produce the mature 5'-terminus. It can also cleave other RNA substrates such as 4.5S RNA. The protein component plays an auxiliary but essential role in vivo by binding to the 5'-leader sequence and broadening the substrate specificity of the ribozyme. This chain is Ribonuclease P protein component, found in Xanthomonas euvesicatoria pv. vesicatoria (strain 85-10) (Xanthomonas campestris pv. vesicatoria).